A 362-amino-acid polypeptide reads, in one-letter code: Large ribosomal subunit protein uL2m (362 aa).

Residues 1 to 23 (MLSYNRFRGYLIPQIHALKLFRY) constitute a mitochondrion transit peptide. A disordered region spans residues 306–362 (AMNPCDHPHGGGGGKSIGNKPSQSPWGVLAKGGYKTRRGKNVNKLLVRDRPRGKEKR). Positions 351–362 (LVRDRPRGKEKR) are enriched in basic and acidic residues.

It belongs to the universal ribosomal protein uL2 family. In terms of assembly, component of the mitochondrial large ribosomal subunit (mt-LSU). Mature yeast 74S mitochondrial ribosomes consist of a small (37S) and a large (54S) subunit. The 37S small subunit contains a 15S ribosomal RNA (15S mt-rRNA) and at least 32 different proteins. The 54S large subunit contains a 21S rRNA (21S mt-rRNA) and at least 45 different proteins. uL2m has a Na/K ligand binding site.

The protein localises to the mitochondrion. Its function is as follows. Component of the mitochondrial ribosome (mitoribosome), a dedicated translation machinery responsible for the synthesis of mitochondrial genome-encoded proteins, including at least some of the essential transmembrane subunits of the mitochondrial respiratory chain. The mitoribosomes are attached to the mitochondrial inner membrane and translation products are cotranslationally integrated into the membrane. The sequence is that of Large ribosomal subunit protein uL2m (rml2) from Schizosaccharomyces pombe (strain 972 / ATCC 24843) (Fission yeast).